A 573-amino-acid polypeptide reads, in one-letter code: Potassium-transporting ATPase potassium-binding subunit (573 aa).

The next 10 helical transmembrane spans lie at Ala3–Leu23, Gly65–Leu85, Gly136–Ile156, Leu179–Pro199, Leu254–Phe274, Ala286–Glu306, Ala383–Val403, Val423–Val443, Gly489–Ala509, and Leu531–Ala551.

Belongs to the KdpA family. As to quaternary structure, the system is composed of three essential subunits: KdpA, KdpB and KdpC.

Its subcellular location is the cell inner membrane. In terms of biological role, part of the high-affinity ATP-driven potassium transport (or Kdp) system, which catalyzes the hydrolysis of ATP coupled with the electrogenic transport of potassium into the cytoplasm. This subunit binds the periplasmic potassium ions and delivers the ions to the membrane domain of KdpB through an intramembrane tunnel. This is Potassium-transporting ATPase potassium-binding subunit from Rhodospirillum centenum (strain ATCC 51521 / SW).